The primary structure comprises 154 residues: 3-dehydroquinate dehydratase (154 aa).

Tyrosine 22 acts as the Proton acceptor in catalysis. Asparagine 73, histidine 79, and aspartate 86 together coordinate substrate. Histidine 99 serves as the catalytic Proton donor. Substrate contacts are provided by residues 100–101 and arginine 110; that span reads LS.

Belongs to the type-II 3-dehydroquinase family. As to quaternary structure, homododecamer.

It carries out the reaction 3-dehydroquinate = 3-dehydroshikimate + H2O. Its pathway is metabolic intermediate biosynthesis; chorismate biosynthesis; chorismate from D-erythrose 4-phosphate and phosphoenolpyruvate: step 3/7. Catalyzes a trans-dehydration via an enolate intermediate. This Carboxydothermus hydrogenoformans (strain ATCC BAA-161 / DSM 6008 / Z-2901) protein is 3-dehydroquinate dehydratase.